Consider the following 252-residue polypeptide: METTTKLAIGVSALCCLASAAFAGGPDIPMIDMNGFHIGLGFGYKSYTYDQVGTVTVTTNGGTVLSVLHPVSASITQFGPVGELGYTFASDWWIAGVKAQYQYDNVRSVHIMDAPLVGSNYSYRTRLGSHLTAMLLAGIKVNEANAVYLEAGYSTVWGKTTLFGPGPVAVSMKNRLNGGIAGIGWRHYFMNNVFLDLSYDYALYRSKSNSVTLSSATASAEGTAIGVSGTVQNPKRVAINGITATVNYLFNI.

The first 23 residues, 1–23 (METTTKLAIGVSALCCLASAAFA), serve as a signal peptide directing secretion.

This sequence belongs to the Coxiella porin P1 (CPP1) (TC 1.B.43) family. In terms of assembly, may form trimers.

The protein resides in the cell outer membrane. In terms of biological role, able to form a pore in lipid bilayers. The sequence is that of Outer membrane protein P1 (ompP1) from Coxiella burnetii (strain RSA 493 / Nine Mile phase I).